The sequence spans 132 residues: Small ribosomal subunit protein uS8 (132 aa).

The protein belongs to the universal ribosomal protein uS8 family. Part of the 30S ribosomal subunit. Contacts proteins S5 and S12.

One of the primary rRNA binding proteins, it binds directly to 16S rRNA central domain where it helps coordinate assembly of the platform of the 30S subunit. This is Small ribosomal subunit protein uS8 from Lacticaseibacillus casei (strain BL23) (Lactobacillus casei).